The following is a 297-amino-acid chain: Homoserine kinase (297 aa).

Residue 82 to 92 (PVSRGLGSSAA) coordinates ATP.

The protein belongs to the GHMP kinase family. Homoserine kinase subfamily.

Its subcellular location is the cytoplasm. The catalysed reaction is L-homoserine + ATP = O-phospho-L-homoserine + ADP + H(+). The protein operates within amino-acid biosynthesis; L-threonine biosynthesis; L-threonine from L-aspartate: step 4/5. Functionally, catalyzes the ATP-dependent phosphorylation of L-homoserine to L-homoserine phosphate. The polypeptide is Homoserine kinase (Clostridium botulinum (strain 657 / Type Ba4)).